The sequence spans 504 residues: Maturase K (504 aa).

This sequence belongs to the intron maturase 2 family. MatK subfamily.

It is found in the plastid. The protein resides in the chloroplast. In terms of biological role, usually encoded in the trnK tRNA gene intron. Probably assists in splicing its own and other chloroplast group II introns. This chain is Maturase K, found in Ochroma pyramidale (Balsa).